The sequence spans 366 residues: Mannonate dehydratase (366 aa).

It belongs to the mannonate dehydratase family. Requires Fe(2+) as cofactor. It depends on Mn(2+) as a cofactor.

The catalysed reaction is D-mannonate = 2-dehydro-3-deoxy-D-gluconate + H2O. Its pathway is carbohydrate metabolism; pentose and glucuronate interconversion. Functionally, catalyzes the dehydration of D-mannonate. This is Mannonate dehydratase from Streptococcus pneumoniae (strain 70585).